Here is a 379-residue protein sequence, read N- to C-terminus: Synaptic vesicle membrane protein VAT-1 (379 aa).

Ser273 carries the phosphoserine modification.

This sequence belongs to the zinc-containing alcohol dehydrogenase family. Quinone oxidoreductase subfamily. In terms of tissue distribution, cholinergic synaptic vesicles.

Its subcellular location is the cytoplasmic vesicle. The protein localises to the secretory vesicle. The protein resides in the synaptic vesicle membrane. Its function is as follows. May play a central role in the functions mediated by specific classes of synaptic vesicles. The chain is Synaptic vesicle membrane protein VAT-1 from Tetronarce californica (Pacific electric ray).